Reading from the N-terminus, the 305-residue chain is Dermonecrotic toxin LrSicTox-alphaIA1ii (305 aa).

Positions 1–18 (MLLYVTLILGCWSAFSES) are cleaved as a signal peptide. Residues 19 to 26 (AETDVAER) constitute a propeptide that is removed on maturation. Residue histidine 37 is part of the active site. 2 residues coordinate Mg(2+): glutamate 57 and aspartate 59. Histidine 73 functions as the Nucleophile in the catalytic mechanism. Intrachain disulfides connect cysteine 77/cysteine 83 and cysteine 79/cysteine 222. Aspartate 117 contributes to the Mg(2+) binding site. Asparagine 282 is a glycosylation site (N-linked (GlcNAc...) asparagine).

This sequence belongs to the arthropod phospholipase D family. Class II subfamily. Class IIa sub-subfamily. Mg(2+) is required as a cofactor. Expressed by the venom gland.

The protein resides in the secreted. The catalysed reaction is an N-(acyl)-sphingosylphosphocholine = an N-(acyl)-sphingosyl-1,3-cyclic phosphate + choline. It carries out the reaction an N-(acyl)-sphingosylphosphoethanolamine = an N-(acyl)-sphingosyl-1,3-cyclic phosphate + ethanolamine. The enzyme catalyses a 1-acyl-sn-glycero-3-phosphocholine = a 1-acyl-sn-glycero-2,3-cyclic phosphate + choline. It catalyses the reaction a 1-acyl-sn-glycero-3-phosphoethanolamine = a 1-acyl-sn-glycero-2,3-cyclic phosphate + ethanolamine. Its activity is regulated as follows. Inhibited with low affinity by edelfosine. Dermonecrotic toxins cleave the phosphodiester linkage between the phosphate and headgroup of certain phospholipids (sphingolipid and lysolipid substrates), forming an alcohol (often choline) and a cyclic phosphate. This toxin acts on sphingomyelin (SM). It also acts on a broad range of lysophospholipids, like lysophosphatidylinositol (LPI), lysophosphatidylglycerol (LPG), lysophosphatidylethanolamine (LPE), lysobisphosphatidic acid (LBPA), lysophosphatidylserine (LPS) and lysophosphatidylcholines (LPC) of varying chain lengths. The substrate preference is LPI &gt; LPG &gt; LPS &gt; LPC &gt;&gt; LPE, LBPA. Furthermore, the enzyme also act on cyclic phosphatidic acid and lyso-platelet activating factor (LPAF, an alkyl-LPC). The enzyme does not act on sphingosylphosphorylcholine (SPC, also known as lyso-sphingomyelin) and PAF. The toxin may also act on ceramide phosphoethanolamine (CPE). It acts by transphosphatidylation, releasing exclusively cyclic phosphate products as second products. It does not exhibit detectable PLA1/2 activity. It induces dose-dependent hemolysis and dermonecrosis. Also induces increased vascular permeability, edema, inflammatory response, and platelet aggregation. In Loxosceles reclusa (Brown recluse spider), this protein is Dermonecrotic toxin LrSicTox-alphaIA1ii.